A 629-amino-acid chain; its full sequence is Natural resistance-associated macrophage protein 2 homolog (629 aa).

The Cytoplasmic portion of the chain corresponds to 1–151 (MNNNNNNKKL…KSKFSIKKLK (151 aa)). The disordered stretch occupies residues 50–119 (NVVNGSIEDS…SDIDSSGDSI (70 aa)). Over residues 62–85 (QQQQQQQQQQQQQQQQQQQQQQQQ) the composition is skewed to low complexity. Positions 96-105 (DKPFQDRDSN) are enriched in basic and acidic residues. A compositionally biased stretch (low complexity) spans 106–118 (IGDGSDIDSSGDS). The helical transmembrane segment at 152 to 172 (SFLGPALFISVGYMDPGNWAT) threads the bilayer. The Extracellular portion of the chain corresponds to 173–182 (DLEGGSRFGY). Residues 183-203 (QLMWVLLFSNIMALFLQTLVI) traverse the membrane as a helical segment. Residues 204–224 (KLALVTKNDLAQQCRKEYSKT) lie on the Cytoplasmic side of the membrane. The helical transmembrane segment at 225 to 245 (VNIFLWLILELAIISTDLAEV) threads the bilayer. The Extracellular portion of the chain corresponds to 246–253 (IGTAIGLN). The chain crosses the membrane as a helical span at residues 254-274 (ILFGLPLIAGVAITSLDTLLF). The Cytoplasmic segment spans residues 275–286 (LAIQRWGIRKLE). A helical transmembrane segment spans residues 287 to 307 (LLILLLLSMITMCFVIELFLS). At 308 to 326 (KPIASEVFSGFVPRLNSDS) the chain is on the extracellular side. Residues 327-347 (VMVATGIVGATTMPHNLFLHG) form a helical membrane-spanning segment. The Cytoplasmic segment spans residues 348-376 (SVVKSRKIPNDRRKSVIKQAYRYNVIDTV). A helical membrane pass occupies residues 377-397 (LALNCAFFVNIAILMLAASVF). Residues 398 to 421 (WKSNIQVTELSEAYRLLTKLMDGK) lie on the Extracellular side of the membrane. A helical transmembrane segment spans residues 422–442 (LAAVLFGLGLFLAGQSSTITG). At 443-468 (TMAGQIVMEGFIKLRIKPWLRRFITR) the chain is on the cytoplasmic side. A helical transmembrane segment spans residues 469-489 (LLAIIPAAIVIIVLGDKGTYT). At 490 to 491 (LL) the chain is on the extracellular side. Residues 492 to 512 (IISQVLLSIGLPFAVVPLIIF) traverse the membrane as a helical segment. Residues 513-527 (TSSYEIMGEFKNRLS) lie on the Cytoplasmic side of the membrane. The chain crosses the membrane as a helical span at residues 528–548 (IIIINSIIALFIIGLNLATIF). Residues 549–565 (QLINDFLHNDSIISKCL) lie on the Extracellular side of the membrane. N-linked (GlcNAc...) asparagine glycosylation is present at asparagine 557. The helical transmembrane segment at 566–586 (TIIFLIPLSIALCCLLLWLII) threads the bilayer. At 587–629 (SKINFFTNLLSKIFNNNNNNNNKNIINNNNNYSGNTINNQTIQ) the chain is on the cytoplasmic side.

It belongs to the NRAMP family.

It is found in the cell membrane. Functionally, divalent transition metal (iron and manganese) transporter. In Dictyostelium discoideum (Social amoeba), this protein is Natural resistance-associated macrophage protein 2 homolog (nramp2).